The chain runs to 217 residues: Ras-related protein Rab-19 (217 aa).

S26, V28, G29, K30, T31, C32, Y42, E44, and T49 together coordinate GTP. Position 31 (T31) interacts with Mg(2+). The Switch 1 signature appears at 39–54; the sequence is SGVYMEAQQNTIGVDF. Mg(2+) contacts are provided by T49 and D72. A Switch 2 motif is present at residues 74–89; it reads AGQERFRTITQSYYRS. GTP is bound by residues G75, N130, K131, D133, S161, A162, and K163. 2 S-geranylgeranyl cysteine lipidation sites follow: C215 and C217. C217 carries the post-translational modification Cysteine methyl ester.

This sequence belongs to the small GTPase superfamily. Rab family. Mg(2+) serves as cofactor.

It is found in the cell membrane. The catalysed reaction is GTP + H2O = GDP + phosphate + H(+). Regulated by guanine nucleotide exchange factors (GEFs) which promote the exchange of bound GDP for free GTP. Regulated by GTPase activating proteins (GAPs) which increase the GTP hydrolysis activity. Inhibited by GDP dissociation inhibitors (GDIs). Functionally, the small GTPases Rab are key regulators of intracellular membrane trafficking, from the formation of transport vesicles to their fusion with membranes. Rabs cycle between an inactive GDP-bound form and an active GTP-bound form that is able to recruit to membranes different set of downstream effectors directly responsible for vesicle formation, movement, tethering and fusion. This is Ras-related protein Rab-19 (RAB19) from Bos taurus (Bovine).